Here is a 31-residue protein sequence, read N- to C-terminus: Cytochrome b6-f complex subunit 6 (31 aa).

A helical transmembrane segment spans residues 4–24 (IISYFLFLIGALTLALVLFIG).

The protein belongs to the PetL family. The 4 large subunits of the cytochrome b6-f complex are cytochrome b6, subunit IV (17 kDa polypeptide, PetD), cytochrome f and the Rieske protein, while the 4 small subunits are PetG, PetL, PetM and PetN. The complex functions as a dimer.

It is found in the plastid. Its subcellular location is the chloroplast thylakoid membrane. In terms of biological role, component of the cytochrome b6-f complex, which mediates electron transfer between photosystem II (PSII) and photosystem I (PSI), cyclic electron flow around PSI, and state transitions. PetL is important for photoautotrophic growth as well as for electron transfer efficiency and stability of the cytochrome b6-f complex. This Marchantia polymorpha (Common liverwort) protein is Cytochrome b6-f complex subunit 6.